A 351-amino-acid chain; its full sequence is MDLHLIGFLLWFFVVQVTTSSAHRNITTTIPALIVFGDSIMDTGNNNDIPTLLKSNFPPYGRDFPGAIPTGRFSDGKVPSDIIAESLGIAKTLPPYLGSNLKPHDLLKGVIFASGGSGYDPLTSTLLSVVSMSDQLKYFQEYLAKIKQHFGEEKVKFILEKSVFLVVSSSNDLAETYWVRSVEYDRNSYAEYLVELASEFIKELSELGAKNIGLFSGVPVGCLPAQRTLFGGFERKCYEKLNNMALHFNSKLSSSLDTLKKELPSRLIFIDVYDTLLDIIKNPTNYGFKVADKGCCGTGKIELMELCNKFTPFTCSDASTHVFFDSYHPSEKAYQIITHKLLAKYRKYLNT.

Positions 1 to 22 (MDLHLIGFLLWFFVVQVTTSSA) are cleaved as a signal peptide. N25 carries an N-linked (GlcNAc...) asparagine glycan. Catalysis depends on S39, which acts as the Nucleophile. Residues D325 and H328 contribute to the active site.

It belongs to the 'GDSL' lipolytic enzyme family.

The protein localises to the secreted. This chain is GDSL esterase/lipase At3g14820, found in Arabidopsis thaliana (Mouse-ear cress).